The chain runs to 356 residues: tRNA N6-adenosine threonylcarbamoyltransferase (356 aa).

A divalent metal cation is bound by residues H124, H128, and Y145. Residues 145–149 (YVSGG), D177, G192, E196, and N287 contribute to the substrate site. D315 serves as a coordination point for a divalent metal cation.

The protein belongs to the KAE1 / TsaD family. Component of the EKC/KEOPS complex composed of at least BUD32, CGI121, GON7, KAE1 and PCC1; the whole complex dimerizes. The cofactor is a divalent metal cation.

The protein resides in the cytoplasm. The protein localises to the nucleus. The enzyme catalyses L-threonylcarbamoyladenylate + adenosine(37) in tRNA = N(6)-L-threonylcarbamoyladenosine(37) in tRNA + AMP + H(+). Its function is as follows. Component of the EKC/KEOPS complex that is required for the formation of a threonylcarbamoyl group on adenosine at position 37 (t(6)A37) in tRNAs that read codons beginning with adenine. The complex is probably involved in the transfer of the threonylcarbamoyl moiety of threonylcarbamoyl-AMP (TC-AMP) to the N6 group of A37. KAE1 likely plays a direct catalytic role in this reaction, but requires other protein(s) of the complex to fulfill this activity. The EKC/KEOPS complex also promotes both telomere uncapping and telomere elongation. The complex is required for efficient recruitment of transcriptional coactivators. In Yarrowia lipolytica (strain CLIB 122 / E 150) (Yeast), this protein is tRNA N6-adenosine threonylcarbamoyltransferase.